Reading from the N-terminus, the 156-residue chain is tRNA (cytidine(34)-2'-O)-methyltransferase (156 aa).

S-adenosyl-L-methionine contacts are provided by glycine 102, leucine 124, and serine 132.

It belongs to the class IV-like SAM-binding methyltransferase superfamily. RNA methyltransferase TrmH family. TrmL subfamily. In terms of assembly, homodimer.

The protein resides in the cytoplasm. The catalysed reaction is cytidine(34) in tRNA + S-adenosyl-L-methionine = 2'-O-methylcytidine(34) in tRNA + S-adenosyl-L-homocysteine + H(+). The enzyme catalyses 5-carboxymethylaminomethyluridine(34) in tRNA(Leu) + S-adenosyl-L-methionine = 5-carboxymethylaminomethyl-2'-O-methyluridine(34) in tRNA(Leu) + S-adenosyl-L-homocysteine + H(+). Functionally, methylates the ribose at the nucleotide 34 wobble position in the two leucyl isoacceptors tRNA(Leu)(CmAA) and tRNA(Leu)(cmnm5UmAA). Catalyzes the methyl transfer from S-adenosyl-L-methionine to the 2'-OH of the wobble nucleotide. The protein is tRNA (cytidine(34)-2'-O)-methyltransferase of Burkholderia ambifaria (strain ATCC BAA-244 / DSM 16087 / CCUG 44356 / LMG 19182 / AMMD) (Burkholderia cepacia (strain AMMD)).